The following is a 651-amino-acid chain: Probable potassium transport system protein Kup (651 aa).

The next 12 membrane-spanning stretches (helical) occupy residues 41-61 (LVLG…IYAF), 82-102 (VVSF…VLFV), 130-150 (LILG…VITP), 163-183 (IVAP…LVTL), 194-214 (VAIV…ASGL), 235-255 (FLTV…LAMT), 276-296 (WLWI…AFIL), 309-329 (MIPS…TVIA), 366-386 (IYIP…VLGF), 395-415 (AYGI…YIVM), 426-446 (ALPI…ANII), and 450-470 (EGGW…WTWV).

The protein belongs to the HAK/KUP transporter (TC 2.A.72) family.

The protein resides in the cell inner membrane. The catalysed reaction is K(+)(in) + H(+)(in) = K(+)(out) + H(+)(out). Its function is as follows. Transport of potassium into the cell. Likely operates as a K(+):H(+) symporter. The chain is Probable potassium transport system protein Kup from Brucella ovis (strain ATCC 25840 / 63/290 / NCTC 10512).